A 163-amino-acid chain; its full sequence is Cuticle protein 38 (163 aa).

Tandem repeats lie at residues 7 to 10 (AAPV), 13 to 16 (AAPA), 20 to 23 (AAPA), 26 to 29 (AAPV), 56 to 59 (AAPA), 62 to 65 (AAPA), 68 to 71 (AAPA), 75 to 78 (AAPA), 81 to 84 (AAPA), 93 to 96 (AAPV), 123 to 126 (AAPA), 135 to 138 (AAPA), 141 to 144 (AAPA), and 156 to 159 (AAPV).

Its function is as follows. Component of the cuticle of migratory locust which contains more than 100 different structural proteins. This Locusta migratoria (Migratory locust) protein is Cuticle protein 38.